Reading from the N-terminus, the 543-residue chain is T-complex protein 1 subunit gamma (543 aa).

This sequence belongs to the TCP-1 chaperonin family.

Its subcellular location is the cytoplasm. Functionally, molecular chaperone; assists the folding of proteins upon ATP hydrolysis. Known to play a role, in vitro, in the folding of actin and tubulin. Plays a role in microtubule polymerization. This Caenorhabditis elegans protein is T-complex protein 1 subunit gamma.